The following is a 209-amino-acid chain: Chalcone isomerase-like protein 2 (209 aa).

The protein belongs to the chalcone isomerase family. Component an active demethylxanthohumol (DMX) biosynthetic metabolon in glandular trichomes (lupulin glands) that encompasses a chalcone synthase (CHS) and a membrane-bound prenyltransferase. Interacts with CHS_H1 and PT1L. Mostly expressed in glandular trichomes (lupulin glands), and, to a lower extent, in cones, cones bracts, leaves, stems and roots.

Its subcellular location is the cytoplasm. The enzyme catalyses a chalcone = a flavanone.. The protein operates within secondary metabolite biosynthesis; flavonoid biosynthesis. In terms of biological role, involved in the biosynthesis of prenylated phenolics natural products which contribute to the bitter taste of beer and display broad biological activities. Involved in anthocyanin biosynthesis. Polyketide binding proteins (PBP) which promotes the catalytic activities of CHS_H1 and PT1L and triggers demethylxanthohumol (DMX) production. In Humulus lupulus (European hop), this protein is Chalcone isomerase-like protein 2.